Consider the following 76-residue polypeptide: MNKALFLCLVVLCAAVVFAAEDLQKAKHAPFKRAARCFCPGKPDRGDLWILRGTCPGGYGYTSNCYKWPNICCYPH.

The signal sequence occupies residues 1-19 (MNKALFLCLVVLCAAVVFA). A propeptide spanning residues 20-31 (AEDLQKAKHAPF) is cleaved from the precursor. Intrachain disulfides connect Cys-37/Cys-72, Cys-39/Cys-65, and Cys-55/Cys-73.

The protein belongs to the sea anemone type 3 (BDS) potassium channel toxin family. In terms of tissue distribution, weakly expressed in the ectodermal tissue from the distal and proximal tentacles, body wall, and oral disk.

The protein resides in the secreted. Its subcellular location is the nematocyst. Functionally, blocks Kv3 voltage-gated potassium channels. Reduces blood pressure. This chain is Kappa-actitoxin-Avd4l, found in Anemonia viridis (Snakelocks anemone).